Reading from the N-terminus, the 618-residue chain is Rho guanine nucleotide exchange factor 25 (618 aa).

Disordered regions lie at residues cysteine 26–glutamate 63 and glycine 169–lysine 193. In terms of domain architecture, DH spans arginine 199–methionine 375. Residues leucine 317–glutamine 338 are important for binding to Rho GTPases. The region spanning lysine 387–glutamate 505 is the PH domain. Residues serine 506 to arginine 532 form a sufficient to bind activated GNAQ region. Disordered regions lie at residues glutamine 521 to threonine 556 and alanine 584 to proline 604. The span at alanine 584–histidine 593 shows a compositional bias: polar residues.

Interacts with activated GNAQ and GNA11. Interacts (via the DH domain) with POPDC1 (via the C-terminus cytoplasmic tail). Interacts with RHOA, CDC42 and RAC1. Highly expressed in excitable tissues, such as brain, heart and muscle. Elevated expression in hippocampus and cerebellum.

It is found in the cytoplasm. The protein localises to the myofibril. It localises to the sarcomere. Its subcellular location is the cell membrane. Functionally, may play a role in actin cytoskeleton reorganization in different tissues since its activation induces formation of actin stress fibers. It works as a guanine nucleotide exchange factor for Rho family of small GTPases. Links specifically G alpha q/11-coupled receptors to RHOA activation. May be an important regulator of processes involved in axon and dendrite formation. In neurons seems to be an exchange factor primarily for RAC1. Involved in skeletal myogenesis. The polypeptide is Rho guanine nucleotide exchange factor 25 (Arhgef25) (Mus musculus (Mouse)).